A 344-amino-acid polypeptide reads, in one-letter code: Thiamine thiazole synthase (344 aa).

Residues cysteine 90, glutamate 111–alanine 112, glycine 119, and valine 184 contribute to the substrate site. Position 232 is a 2,3-didehydroalanine (Cys) (cysteine 232). Residues aspartate 234, histidine 249, methionine 301, and arginine 311–glycine 313 each bind substrate.

This sequence belongs to the THI4 family. Homooctamer. Interacts with cyp-41. Fe cation is required as a cofactor. In terms of processing, during the catalytic reaction, a sulfide is transferred from Cys-232 to a reaction intermediate, generating a dehydroalanine residue.

It localises to the cytoplasm. It is found in the nucleus. The enzyme catalyses [ADP-thiazole synthase]-L-cysteine + glycine + NAD(+) = [ADP-thiazole synthase]-dehydroalanine + ADP-5-ethyl-4-methylthiazole-2-carboxylate + nicotinamide + 3 H2O + 2 H(+). In terms of biological role, involved in biosynthesis of the thiamine precursor thiazole. Catalyzes the conversion of NAD and glycine to adenosine diphosphate 5-(2-hydroxyethyl)-4-methylthiazole-2-carboxylic acid (ADT), an adenylated thiazole intermediate. The reaction includes an iron-dependent sulfide transfer from a conserved cysteine residue of the protein to a thiazole intermediate. The enzyme can only undergo a single turnover, which suggests it is a suicide enzyme. May have additional roles in adaptation to various stress conditions and in DNA damage tolerance. The protein is Thiamine thiazole synthase of Neurospora crassa (strain ATCC 24698 / 74-OR23-1A / CBS 708.71 / DSM 1257 / FGSC 987).